The chain runs to 100 residues: Small ribosomal subunit protein bS6 (100 aa).

It belongs to the bacterial ribosomal protein bS6 family.

Its function is as follows. Binds together with bS18 to 16S ribosomal RNA. This chain is Small ribosomal subunit protein bS6, found in Enterococcus faecalis (strain ATCC 700802 / V583).